The primary structure comprises 210 residues: TM2 domain-containing protein C02F5.13 (210 aa).

An N-terminal signal peptide occupies residues methionine 1–glycine 18. At asparagine 19–cysteine 138 the chain is on the extracellular side. Residue asparagine 91 is glycosylated (N-linked (GlcNAc...) asparagine). The chain crosses the membrane as a helical span at residues isoleucine 139 to valine 159. The TM2 domain occupies glycine 143 to phenylalanine 191. Residues alanine 160–threonine 178 lie on the Cytoplasmic side of the membrane. Residues leucine 179–glycine 199 traverse the membrane as a helical segment. Residues proline 200–tyrosine 210 lie on the Extracellular side of the membrane.

It belongs to the TM2 family.

Its subcellular location is the membrane. The protein is TM2 domain-containing protein C02F5.13 of Caenorhabditis elegans.